An 82-amino-acid polypeptide reads, in one-letter code: M-zodatoxin-Lt3a (82 aa).

An N-terminal signal peptide occupies residues 1-22; sequence MKTYAVLLALVVAFVCIAESTG. The propeptide occupies 23–61; it reads YPVEDLEDDELTELEAEALLEDLLEDLELEDLDYNEEAR. The Processing quadruplet motif signature appears at 58–61; it reads EEAR. Alanine 81 carries the alanine amide modification.

It belongs to the cationic peptide 03 (latarcin) family. 03 subfamily. Post-translationally, cleavage of the propeptide depends on the processing quadruplet motif (XXXR, with at least one of X being E). Expressed by the venom gland.

It localises to the secreted. It is found in the target cell membrane. It has antimicrobial activity against Gram-positive bacteria (A.globiformis VKM Ac-1112 (MIC=0.3 uM), and B.subtilis VKM B-501 (MIC=1.2 uM)), Gram-negative bacteria (E.coli DH5-alpha (MIC=2.5 uM), E.coli MH1 (MIC=6.0 uM), and P.aeruginosa PAO1 (MIC&gt;40 uM)), and yeasts (P.pastoris GS115 (MIC=20 uM), and S.cerevisiae Y190 (MIC=20 uM)). Causes paralysis, but is not lethal when injected into insect (M.domestica) larvae. A second study reports antibacterial activity against E.coli (MIC=100 uM) and S.aureus (MIC=84 uM). Furthermore, increases efficacy of antibiotics (chloramphenicol, streptomycin, kanamycin, novobiocin) when tested against E.coli, probably by facilitating their incorporation into the bacteria. The chain is M-zodatoxin-Lt3a from Lachesana tarabaevi (Spider).